Consider the following 274-residue polypeptide: Acetyl-coenzyme A carboxylase carboxyl transferase subunit alpha (274 aa).

The region spanning 2 to 250 (NKEFIKSIVV…KKELMNAMNE (249 aa)) is the CoA carboxyltransferase C-terminal domain.

It belongs to the AccA family. In terms of assembly, acetyl-CoA carboxylase is a heterohexamer composed of biotin carboxyl carrier protein (AccB), biotin carboxylase (AccC) and two subunits each of ACCase subunit alpha (AccA) and ACCase subunit beta (AccD).

It localises to the cytoplasm. The catalysed reaction is N(6)-carboxybiotinyl-L-lysyl-[protein] + acetyl-CoA = N(6)-biotinyl-L-lysyl-[protein] + malonyl-CoA. It participates in lipid metabolism; malonyl-CoA biosynthesis; malonyl-CoA from acetyl-CoA: step 1/1. Component of the acetyl coenzyme A carboxylase (ACC) complex. First, biotin carboxylase catalyzes the carboxylation of biotin on its carrier protein (BCCP) and then the CO(2) group is transferred by the carboxyltransferase to acetyl-CoA to form malonyl-CoA. The protein is Acetyl-coenzyme A carboxylase carboxyl transferase subunit alpha of Clostridium botulinum (strain Eklund 17B / Type B).